The following is a 168-amino-acid chain: Protein OPG162 (168 aa).

The Intravirion segment spans residues 1–14 (MKSLNRQTVSRFKK). A helical transmembrane segment spans residues 15–37 (LSVPAAIMMILSTIISGIGTFLH). Residues 38–168 (YKEELMPSAC…SVLCVKKFYK (131 aa)) lie on the Virion surface side of the membrane. In terms of domain architecture, C-type lectin spans 54–163 (YDKHCYLDTN…CKSTQSVLCV (110 aa)). Cystine bridges form between Cys-75/Cys-162 and Cys-141/Cys-154. N-linked (GlcNAc...) asparagine; by host glycosylation occurs at Asn-133.

It belongs to the orthopoxvirus OPG162 protein family. In terms of assembly, interacts with protein OPG161. Interacts with protein OPG164. Interacts with protein OPG190.

Its subcellular location is the virion membrane. It is found in the host Golgi apparatus. Forms a complex with OPG162 and OPG190 to coordinate the incorporation of OPG164 into wrapped enveloped virion (EV) membranes and, subsequently, the production of actin tails. Therefore plays an essential role in efficient cell-to-cell spread of viral particles. This Vaccinia virus (strain Western Reserve) (VACV) protein is Protein OPG162 (OPG162).